The chain runs to 125 residues: Fluoride-specific ion channel FluC (125 aa).

4 helical membrane-spanning segments follow: residues 4–24 (ILLVGAGGALGSVLRYLVGLW), 32–52 (AFPWGTLFVNVTGSFLIGFLA), 68–88 (FLITGVLGGYTTFSAFSLDAI), and 100–120 (LAYIVASVGLSMLAVFAGLAL). Residues Gly-75 and Thr-78 each coordinate Na(+).

Belongs to the fluoride channel Fluc/FEX (TC 1.A.43) family.

The protein resides in the cell inner membrane. The enzyme catalyses fluoride(in) = fluoride(out). Its activity is regulated as follows. Na(+) is not transported, but it plays an essential structural role and its presence is essential for fluoride channel function. Functionally, fluoride-specific ion channel. Important for reducing fluoride concentration in the cell, thus reducing its toxicity. This Rhizobium meliloti (strain 1021) (Ensifer meliloti) protein is Fluoride-specific ion channel FluC.